A 134-amino-acid chain; its full sequence is Transmembrane protein 100 (134 aa).

The tract at residues 1–23 (MTEESTKENLGAPKSPTPVTMEK) is disordered. Residue serine 15 is modified to Phosphoserine. A run of 2 helical transmembrane segments spans residues 56 to 76 (CIIPFAVVVFITGIVVTAVAY) and 84 to 104 (IISIFGLVLLSSGLFLLASSA). Serine 121 carries the post-translational modification Phosphoserine.

In terms of assembly, interacts (via C-terminus) with TRPA1 and TRPV1. Interacts with TASOR. In terms of tissue distribution, expressed in dorsal root ganglia. Expressed in neurons as well as nerve fiber bundles connecting ganglia and fibers innervating muscle layer of the gastric body, jejunum, and proximal colon. Expressed in arterial endothelial cells and neurons of the central nervous system and peripheral nervous system (at protein level). Expressed strongly in lung, weakly in brain, heart and muscle. Expressed in enteric neurons and vascular tissue in the muscularis propria of the gastrointestinal tract.

The protein resides in the cell membrane. It localises to the membrane. Its subcellular location is the perikaryon. The protein localises to the cytoplasm. It is found in the perinuclear region. The protein resides in the endoplasmic reticulum. Functionally, plays a role during embryonic arterial endothelium differentiation and vascular morphogenesis through the ACVRL1 receptor-dependent signaling pathway upon stimulation by bone morphogenetic proteins, such as GDF2/BMP9 and BMP10. Involved in the regulation of nociception, acting as a modulator of the interaction between TRPA1 and TRPV1, two molecular sensors and mediators of pain signals in dorsal root ganglia (DRG) neurons. Mechanistically, it weakens their interaction, thereby releasing the inhibition of TRPA1 by TRPV1 and increasing the single-channel open probability of the TRPA1-TRPV1 complex. The sequence is that of Transmembrane protein 100 (Tmem100) from Mus musculus (Mouse).